A 659-amino-acid polypeptide reads, in one-letter code: QWRF motif-containing protein 2 (659 aa).

Disordered regions lie at residues 1–125 (MVAA…SVTV), 157–221 (SKKK…LDCG), 291–317 (DTDS…ISKS), 340–359 (RLQD…TSSI), and 371–429 (SDAV…NAYN). The span at 42–72 (SPSPSHSVSSTTTTTTTTTTTTSSSSSSSSS) shows a compositional bias: low complexity. A compositionally biased stretch (polar residues) spans 90 to 102 (RSTTNSASNSIKT). Positions 172-190 (STPERRRSTPVRDQRENSK) are enriched in basic and acidic residues. Polar residues-rich tracts occupy residues 206 to 216 (SESVVPNSLSR) and 291 to 303 (DTDS…TNGV). Composition is skewed to low complexity over residues 345–359 (GSPL…TSSI) and 401–418 (ATTT…SRAR). The short motif at 468–471 (QWRF) is the QWRF motif element.

Belongs to the QWRF family.

This chain is QWRF motif-containing protein 2 (QWRF2), found in Arabidopsis thaliana (Mouse-ear cress).